The following is a 160-amino-acid chain: Gene 34 protein (160 aa).

Positions Met-1 to Thr-11 are enriched in polar residues. The disordered stretch occupies residues Met-1–Ile-26.

The polypeptide is Gene 34 protein (Equus caballus (Horse)).